The chain runs to 96 residues: Aspartyl/glutamyl-tRNA(Asn/Gln) amidotransferase subunit C (96 aa).

The protein belongs to the GatC family. Heterotrimer of A, B and C subunits.

The enzyme catalyses L-glutamyl-tRNA(Gln) + L-glutamine + ATP + H2O = L-glutaminyl-tRNA(Gln) + L-glutamate + ADP + phosphate + H(+). It catalyses the reaction L-aspartyl-tRNA(Asn) + L-glutamine + ATP + H2O = L-asparaginyl-tRNA(Asn) + L-glutamate + ADP + phosphate + 2 H(+). Its function is as follows. Allows the formation of correctly charged Asn-tRNA(Asn) or Gln-tRNA(Gln) through the transamidation of misacylated Asp-tRNA(Asn) or Glu-tRNA(Gln) in organisms which lack either or both of asparaginyl-tRNA or glutaminyl-tRNA synthetases. The reaction takes place in the presence of glutamine and ATP through an activated phospho-Asp-tRNA(Asn) or phospho-Glu-tRNA(Gln). This Geobacillus kaustophilus (strain HTA426) protein is Aspartyl/glutamyl-tRNA(Asn/Gln) amidotransferase subunit C.